Here is a 136-residue protein sequence, read N- to C-terminus: ATP synthase epsilon chain (136 aa).

The protein belongs to the ATPase epsilon chain family. In terms of assembly, F-type ATPases have 2 components, CF(1) - the catalytic core - and CF(0) - the membrane proton channel. CF(1) has five subunits: alpha(3), beta(3), gamma(1), delta(1), epsilon(1). CF(0) has three main subunits: a, b and c.

It localises to the cell inner membrane. Produces ATP from ADP in the presence of a proton gradient across the membrane. The polypeptide is ATP synthase epsilon chain (Myxococcus xanthus (strain DK1622)).